A 280-amino-acid polypeptide reads, in one-letter code: Acetyl-coenzyme A carboxylase carboxyl transferase subunit beta (280 aa).

Residues 28–280 (LFLACPYCGA…IVRLHTAEAE (253 aa)) form the CoA carboxyltransferase N-terminal domain. The Zn(2+) site is built by Cys32, Cys35, Cys50, and Cys53. The segment at 32 to 53 (CPYCGAQMYNKQLGKYRVCAKC) adopts a C4-type zinc-finger fold.

This sequence belongs to the AccD/PCCB family. In terms of assembly, acetyl-CoA carboxylase is a heterohexamer composed of biotin carboxyl carrier protein (AccB), biotin carboxylase (AccC) and two subunits each of ACCase subunit alpha (AccA) and ACCase subunit beta (AccD). The cofactor is Zn(2+).

It localises to the cytoplasm. The catalysed reaction is N(6)-carboxybiotinyl-L-lysyl-[protein] + acetyl-CoA = N(6)-biotinyl-L-lysyl-[protein] + malonyl-CoA. The protein operates within lipid metabolism; malonyl-CoA biosynthesis; malonyl-CoA from acetyl-CoA: step 1/1. Its function is as follows. Component of the acetyl coenzyme A carboxylase (ACC) complex. Biotin carboxylase (BC) catalyzes the carboxylation of biotin on its carrier protein (BCCP) and then the CO(2) group is transferred by the transcarboxylase to acetyl-CoA to form malonyl-CoA. The polypeptide is Acetyl-coenzyme A carboxylase carboxyl transferase subunit beta (Leuconostoc mesenteroides subsp. mesenteroides (strain ATCC 8293 / DSM 20343 / BCRC 11652 / CCM 1803 / JCM 6124 / NCDO 523 / NBRC 100496 / NCIMB 8023 / NCTC 12954 / NRRL B-1118 / 37Y)).